A 314-amino-acid chain; its full sequence is Very long chain fatty acid elongase 4 (314 aa).

N-linked (GlcNAc...) asparagine glycosylation is present at N20. 7 helical membrane passes run 42–62 (LMQSPWPTLSISTLYLLFVWL), 78–98 (VLIIYNFGMVLLNFFIFRELF), 127–147 (ALWWYFVSKGVEYLDTVFFIL), 165–185 (MFTLWWIGIKWVAGGQAFFGA), 188–208 (NSFIHVIMYSYYGLAAFGPWI), 217–237 (YLTMLQLVQFHVTIGHTALSL), and 247–267 (MHWALIAYAISFIFLFLNFYI). Positions 274–314 (KKPKTGKTAMNGISANGVSKSEKQLVIENGKKQKNGKAKGD) are disordered. Residues 293-304 (KSEKQLVIENGK) are compositionally biased toward basic and acidic residues. The segment covering 305-314 (KQKNGKAKGD) has biased composition (basic residues). Positions 310–314 (KAKGD) match the Di-lysine motif motif.

The protein belongs to the ELO family. ELOVL4 subfamily. Oligomer. N-glycosylated. As to expression, expressed mainly in retina. Also expressed in skin and thymus.

The protein localises to the endoplasmic reticulum membrane. It carries out the reaction a very-long-chain acyl-CoA + malonyl-CoA + H(+) = a very-long-chain 3-oxoacyl-CoA + CO2 + CoA. The catalysed reaction is hexacosanoyl-CoA + malonyl-CoA + H(+) = 3-oxooctacosanyol-CoA + CO2 + CoA. The enzyme catalyses octacosanoyl-CoA + malonyl-CoA + H(+) = 3-oxo-triacontanoyl-CoA + CO2 + CoA. It catalyses the reaction triacontanoyl-CoA + malonyl-CoA + H(+) = 3-oxo-dotriacontanoyl-CoA + CO2 + CoA. It carries out the reaction (19Z,22Z,25Z,28Z,31Z)-tetratriacontapentaenoyl-CoA + malonyl-CoA + H(+) = 3-oxo-(21Z,24Z,27Z,30Z,33Z)-hexatriacontapentaenoyl-CoA + CO2 + CoA. The catalysed reaction is (4Z,7Z,10Z,13Z,16Z,19Z)-docosahexaenoyl-CoA + malonyl-CoA + H(+) = 3-oxo-(6Z,9Z,12Z,15Z,18Z,21Z)-tetracosahexaenoyl-CoA + CO2 + CoA. The enzyme catalyses (7Z,10Z,13Z,16Z)-docosatetraenoyl-CoA + malonyl-CoA + H(+) = (9Z,12Z,15Z,18Z)-3-oxotetracosatetraenoyl-CoA + CO2 + CoA. It catalyses the reaction (11Z,14Z,17Z,20Z,23Z)-hexacosapentaenoyl-CoA + malonyl-CoA + H(+) = 3-oxo-(13Z,16Z,19Z,22Z,25Z)-octacosapentaenoyl-CoA + CO2 + CoA. It carries out the reaction (13Z,16Z,19Z,22Z,25Z)-octacosapentaenoyl-CoA + malonyl-CoA + H(+) = 3-oxo-(15Z,18Z,21Z,24Z,27Z)-triacontapentaenoyl-CoA + CO2 + CoA. The catalysed reaction is (15Z,18Z,21Z,24Z,27Z)-triacontapentaenoyl-CoA + malonyl-CoA + H(+) = 3-oxo-(17Z,20Z,23Z,26Z,29Z)-dotriacontapentaenoyl-CoA + CO2 + CoA. The enzyme catalyses (17Z,20Z,23Z,26Z,29Z)-dotriacontapentaenoyl-CoA + malonyl-CoA + H(+) = 3-oxo-(19Z,22Z,25Z,28Z,31Z)-tetratriacontapentaenoyl-CoA + CO2 + CoA. It catalyses the reaction (21Z,24Z,27Z,30Z,33Z)-hexatriacontapentaenoyl-CoA + malonyl-CoA + H(+) = 3-oxo-(23Z,26Z,29Z,32Z,35Z)-octatriacontapentaenoyl-CoA + CO2 + CoA. It carries out the reaction (11Z,14Z,17Z,20Z)-hexacosatetraenoyl-CoA + malonyl-CoA + H(+) = (13Z,16Z,19Z,22Z)-3-oxooctacosatetraenoyl-CoA + CO2 + CoA. The catalysed reaction is (13Z,16Z,19Z,22Z)-octacosatetraenoyl-CoA + malonyl-CoA + H(+) = 3-oxo-(15Z,18Z,21Z,24Z)-triacontatetraenoyl-CoA + CO2 + CoA. The enzyme catalyses (15Z,18Z,21Z,24Z)-triacontatetraenoyl-CoA + malonyl-CoA + H(+) = 3-oxo-(17Z,20Z,23Z,26Z)-dotriacontatetraenoyl-CoA + CO2 + CoA. It catalyses the reaction (17Z,20Z,23Z,26Z)-dotriacontatetraenoyl-CoA + malonyl-CoA + H(+) = 3-oxo-(19Z,22Z,25Z,28Z)-tetratriacontatetraenoyl-CoA + CO2 + CoA. It carries out the reaction (19Z,22Z,25Z,28Z)-tetratriacontatetraenoyl-CoA + malonyl-CoA + H(+) = 3-oxo-(21Z,24Z,27Z,30Z)-hexatriacontatetraenoyl-CoA + CO2 + CoA. The catalysed reaction is (21Z,24Z,27Z,30Z)-hexatriacontatetraenoyl-CoA + malonyl-CoA + H(+) = 3-oxo-(23Z,26Z,29Z,32Z)-octatriacontatetraenoyl-CoA + CO2 + CoA. The enzyme catalyses (6Z,9Z,12Z,15Z,18Z,21Z)-tetracosahexaenoyl-CoA + malonyl-CoA + H(+) = 3-oxo-(8Z,11Z,14Z,17Z,20Z,23Z)-hexacosahexaenoyl-CoA + CO2 + CoA. It catalyses the reaction (8Z,11Z,14Z,17Z,20Z,23Z)-hexacosahexaenoyl-CoA + malonyl-CoA + H(+) = 3-oxo-(10Z,13Z,16Z,19Z,22Z,25Z)-octacosahexaenoyl-CoA + CO2 + CoA. It carries out the reaction (10Z,13Z,16Z,19Z,22Z,25Z)-octacosahexaenoyl-CoA + malonyl-CoA + H(+) = 3-oxo-(12Z,15Z,18Z,21Z,24Z,27Z)-triacontahexaenoyl-CoA + CO2 + CoA. The catalysed reaction is (12Z,15Z,18Z,21Z,24Z,27Z)-triacontahexaenoyl-CoA + malonyl-CoA + H(+) = 3-oxo-(14Z,17Z,20Z,23Z,26Z,29Z)-dotriacontahexaenoyl-CoA + CO2 + CoA. The enzyme catalyses (14Z,17Z,20Z,23Z,26Z,29Z)-dotriacontahexaenoyl-CoA + malonyl-CoA + H(+) = 3-oxo-(16Z,19Z,22Z,25Z,28Z,31Z)-tetratriacontahexaenoyl-CoA + CO2 + CoA. It catalyses the reaction (16Z,19Z,22Z,25Z,28Z,31Z)-tetratriacontahexaenoyl-CoA + malonyl-CoA + H(+) = 3-oxo-(18Z,21Z,24Z,27Z,30Z,33Z)-hexatriacontahexaenoyl-CoA + CO2 + CoA. It carries out the reaction (9Z,12Z,15Z,18Z,21Z)-tetracosapentaenoyl-CoA + malonyl-CoA + H(+) = 3-oxo-(11Z,14Z,17Z,20Z,23Z)-hexacosapentaenoyl-CoA + CO2 + CoA. It functions in the pathway lipid metabolism; fatty acid biosynthesis. Functionally, catalyzes the first and rate-limiting reaction of the four reactions that constitute the long-chain fatty acids elongation cycle. This endoplasmic reticulum-bound enzymatic process allows the addition of 2 carbons to the chain of long- and very long-chain fatty acids (VLCFAs) per cycle. Condensing enzyme that catalyzes the synthesis of very long chain saturated (VLC-SFA) and polyunsaturated (PUFA) fatty acids that are involved in multiple biological processes as precursors of membrane lipids and lipid mediators. May play a critical role in early brain and skin development. This Macaca fascicularis (Crab-eating macaque) protein is Very long chain fatty acid elongase 4.